A 1225-amino-acid polypeptide reads, in one-letter code: uncharacterized protein (1225 aa).

Positions 1–15 are enriched in polar residues; that stretch reads MSSQAEPSKGASNAD. The interval 1–104 is disordered; the sequence is MSSQAEPSKG…VDGVPTRPVS (104 aa). Over residues 16 to 25 the composition is skewed to basic and acidic residues; the sequence is PNEKVEKMHL. Polar residues predominate over residues 43-65; that stretch reads ASPSDKNNLNPQSAGVSEVQVQD. Residues 167-187 traverse the membrane as a helical segment; the sequence is FLFGYLRFGFLSLFIIMAVCI. One can recognise an SMP-LTD domain in the interval 217 to 422; that stretch reads DSETVTWLNT…SPNVYELDIE (206 aa). C2 domains follow at residues 413-534, 559-668, and 685-803; these read SPNV…NDAF, DSGE…LLWF, and KPAQ…GALM. A Phosphoserine modification is found at serine 843. Residues 867-890 form a disordered region; it reads PESQKTPTAVDNTSTSRGSTSVKT. Residues 869-890 are compositionally biased toward polar residues; that stretch reads SQKTPTAVDNTSTSRGSTSVKT. The C2 4 domain occupies 1019 to 1137; sequence RLTPVPVKLE…QQQQQTNYEI (119 aa). Aspartate 1053, aspartate 1059, aspartate 1107, aspartate 1109, and aspartate 1115 together coordinate Ca(2+).

The cofactor is Ca(2+).

Its subcellular location is the endoplasmic reticulum membrane. This is an uncharacterized protein from Schizosaccharomyces pombe (strain 972 / ATCC 24843) (Fission yeast).